The primary structure comprises 588 residues: L-fucose isomerase (588 aa).

Active-site proton acceptor residues include Glu-335 and Asp-359. Mn(2+) contacts are provided by Glu-335, Asp-359, and His-525.

The protein belongs to the L-fucose isomerase family. Mn(2+) is required as a cofactor.

The protein localises to the cytoplasm. The catalysed reaction is L-fucose = L-fuculose. It functions in the pathway carbohydrate degradation; L-fucose degradation; L-lactaldehyde and glycerone phosphate from L-fucose: step 1/3. Functionally, converts the aldose L-fucose into the corresponding ketose L-fuculose. The chain is L-fucose isomerase from Streptococcus pneumoniae serotype 2 (strain D39 / NCTC 7466).